The sequence spans 562 residues: Ribonuclease Y (562 aa).

Residues 1-21 form a helical membrane-spanning segment; it reads MNMLYFVLALLVGLAGGFFVG. The disordered stretch occupies residues 108–129; sequence AAQDAARERETLSADRQETRRE. The KH domain occupies 252–312; that stretch reads SVSVVPIPND…VRREVARHVL (61 aa). Residues 378 to 471 form the HD domain; that stretch reads VLKHSVQVAH…VAAADAISAA (94 aa).

This sequence belongs to the RNase Y family.

The protein localises to the cell membrane. Functionally, endoribonuclease that initiates mRNA decay. This is Ribonuclease Y from Deinococcus geothermalis (strain DSM 11300 / CIP 105573 / AG-3a).